A 1177-amino-acid chain; its full sequence is Chromosome partition protein Smc (1177 aa).

34–41 (ANGSGKSN) contributes to the ATP binding site. The stretch at 167-506 (SGIAEYDSKK…IAAEAQREVR (340 aa)) forms a coiled coil. In terms of domain architecture, SMC hinge spans 521 to 627 (GIYGTLAELI…VIVNSMEEAR (107 aa)). Residues 659 to 1012 (LAVDTTKLRE…NEIEKEKKNV (354 aa)) adopt a coiled-coil conformation.

This sequence belongs to the SMC family. As to quaternary structure, homodimer.

The protein resides in the cytoplasm. Its function is as follows. Required for chromosome condensation and partitioning. Binds single-stranded but not double-stranded DNA. In Pyrococcus furiosus (strain ATCC 43587 / DSM 3638 / JCM 8422 / Vc1), this protein is Chromosome partition protein Smc.